Here is a 336-residue protein sequence, read N- to C-terminus: Phospho-N-acetylmuramoyl-pentapeptide-transferase (336 aa).

Helical transmembrane passes span 1-21, 56-76, 78-98, 124-144, 148-168, 184-204, 210-230, 239-259, 264-284, and 314-334; these read MLPL…SLFL, IPTA…LLLF, IQLW…ALGW, CLAA…FLSF, FLGI…FAIA, GLDG…LVVA, PWAF…LGFL, VFMG…CAVL, FLLL…IVQV, and VVRN…IAVF.

It belongs to the glycosyltransferase 4 family. MraY subfamily. Mg(2+) serves as cofactor.

It localises to the cell inner membrane. The enzyme catalyses UDP-N-acetyl-alpha-D-muramoyl-L-alanyl-gamma-D-glutamyl-meso-2,6-diaminopimeloyl-D-alanyl-D-alanine + di-trans,octa-cis-undecaprenyl phosphate = di-trans,octa-cis-undecaprenyl diphospho-N-acetyl-alpha-D-muramoyl-L-alanyl-D-glutamyl-meso-2,6-diaminopimeloyl-D-alanyl-D-alanine + UMP. Its pathway is cell wall biogenesis; peptidoglycan biosynthesis. Functionally, catalyzes the initial step of the lipid cycle reactions in the biosynthesis of the cell wall peptidoglycan: transfers peptidoglycan precursor phospho-MurNAc-pentapeptide from UDP-MurNAc-pentapeptide onto the lipid carrier undecaprenyl phosphate, yielding undecaprenyl-pyrophosphoryl-MurNAc-pentapeptide, known as lipid I. In Chlamydia trachomatis serovar L2b (strain UCH-1/proctitis), this protein is Phospho-N-acetylmuramoyl-pentapeptide-transferase.